The chain runs to 416 residues: Prostate tumor-overexpressed gene 1 protein (416 aa).

A disordered region spans residues 1-53; it reads MVRPRRAPYRSGAGGPLGGRGRPPRPLVVRAVRSRSWPASPRGPQPPRIRARS. Over residues 12 to 21 the composition is skewed to gly residues; sequence GAGGPLGGRG. Positions 27-36 are enriched in low complexity; it reads LVVRAVRSRS. Residue Ser53 is modified to Phosphoserine. The interaction with FLOT1 stretch occupies residues 184 to 416; it reads NGFAGCMLFP…QEQQQRGMGG (233 aa).

This sequence belongs to the Mediator complex subunit 25 family. PTOV1 subfamily. As to quaternary structure, may interact with CREBBP. Interacts with FLOT1. In terms of processing, ubiquitinated by the CRL2(KLHDC2) complex, which recognizes the diglycine (Gly-Gly) at the C-terminus, leading to its degradation. Ubiquitinated by the CRL2(APPBP2) complex, which recognizes the Arg-Xaa-Xaa-Gly sequence at the C-terminus, leading to its degradation. In terms of tissue distribution, expressed in brain, heart, kidney, liver, placenta, skeletal muscle and small intestine.

Its subcellular location is the cytoplasm. It is found in the nucleus. It localises to the cell membrane. The protein resides in the perinuclear region. May activate transcription. Required for nuclear translocation of FLOT1. Promotes cell proliferation. This Homo sapiens (Human) protein is Prostate tumor-overexpressed gene 1 protein (PTOV1).